The following is a 114-amino-acid chain: Large ribosomal subunit protein bL20c (114 aa).

This sequence belongs to the bacterial ribosomal protein bL20 family.

The protein localises to the plastid. It is found in the chloroplast. Binds directly to 23S ribosomal RNA and is necessary for the in vitro assembly process of the 50S ribosomal subunit. It is not involved in the protein synthesizing functions of that subunit. The protein is Large ribosomal subunit protein bL20c of Tetradesmus obliquus (Green alga).